Reading from the N-terminus, the 183-residue chain is MTHILVVDNHGQFTHLEHRLLRDMDGVTVDLTDNTTPPADIDADGLVLSGGPTMADIGHCREYLTLDVPILGVCLGHQLIADELGGRIEAGDYGGYADVTVSISDADDPLVGSLAPDTRVWASHADEVVAVPDGFTITAESDICGVEAMGDTDRDLYGVQWHPEVAHTEEGEAVFENFVAICE.

The 181-residue stretch at 3–183 (HILVVDNHGQ…VFENFVAICE (181 aa)) folds into the Glutamine amidotransferase type-1 domain. The Nucleophile role is filled by Cys74. Catalysis depends on residues His162 and Glu164.

Heterodimer composed of a glutamine amidotransferase subunit (A) and a GMP-binding subunit (B).

It catalyses the reaction XMP + L-glutamine + ATP + H2O = GMP + L-glutamate + AMP + diphosphate + 2 H(+). The protein operates within purine metabolism; GMP biosynthesis; GMP from XMP (L-Gln route): step 1/1. Catalyzes the synthesis of GMP from XMP. This Halobacterium salinarum (strain ATCC 700922 / JCM 11081 / NRC-1) (Halobacterium halobium) protein is GMP synthase [glutamine-hydrolyzing] subunit A.